The chain runs to 258 residues: 5'-nucleotidase SurE (258 aa).

A divalent metal cation is bound by residues D13, D14, S44, and N92. The segment at 237 to 258 (SPLTAPHSTEHHDALDGIATEF) is disordered.

The protein belongs to the SurE nucleotidase family. A divalent metal cation is required as a cofactor.

The protein localises to the cytoplasm. The enzyme catalyses a ribonucleoside 5'-phosphate + H2O = a ribonucleoside + phosphate. Nucleotidase that shows phosphatase activity on nucleoside 5'-monophosphates. The protein is 5'-nucleotidase SurE of Halobacterium salinarum (strain ATCC 29341 / DSM 671 / R1).